Reading from the N-terminus, the 272-residue chain is HMP-PP phosphatase (272 aa).

Aspartate 8 functions as the Nucleophile in the catalytic mechanism. 3 residues coordinate Mg(2+): aspartate 8, aspartate 10, and aspartate 212.

This sequence belongs to the HAD-like hydrolase superfamily. Cof family. It depends on Mg(2+) as a cofactor.

The catalysed reaction is 4-amino-2-methyl-5-(diphosphooxymethyl)pyrimidine + H2O = 4-amino-2-methyl-5-(phosphooxymethyl)pyrimidine + phosphate + H(+). Functionally, catalyzes the hydrolysis of 4-amino-2-methyl-5-hydroxymethylpyrimidine pyrophosphate (HMP-PP) to 4-amino-2-methyl-5-hydroxymethylpyrimidine phosphate (HMP-P). This Escherichia coli O81 (strain ED1a) protein is HMP-PP phosphatase.